Here is a 240-residue protein sequence, read N- to C-terminus: ATP-dependent dethiobiotin synthetase BioD (240 aa).

15 to 20 (EIGKTF) contacts ATP. Residue Thr-19 coordinates Mg(2+). Lys-40 is a catalytic residue. Residues Asp-57, 118 to 121 (EGVG), and 178 to 179 (NR) each bind ATP. Mg(2+) is bound by residues Asp-57 and Glu-118.

The protein belongs to the dethiobiotin synthetase family. Homodimer. The cofactor is Mg(2+).

The protein localises to the cytoplasm. The catalysed reaction is (7R,8S)-7,8-diammoniononanoate + CO2 + ATP = (4R,5S)-dethiobiotin + ADP + phosphate + 3 H(+). The protein operates within cofactor biosynthesis; biotin biosynthesis; biotin from 7,8-diaminononanoate: step 1/2. Functionally, catalyzes a mechanistically unusual reaction, the ATP-dependent insertion of CO2 between the N7 and N8 nitrogen atoms of 7,8-diaminopelargonic acid (DAPA, also called 7,8-diammoniononanoate) to form a ureido ring. The chain is ATP-dependent dethiobiotin synthetase BioD from Burkholderia mallei (strain NCTC 10247).